The sequence spans 158 residues: Phosphopantetheine adenylyltransferase (158 aa).

Thr-10 provides a ligand contact to substrate. ATP-binding positions include 10-11 and His-18; that span reads TF. Positions 42, 74, and 88 each coordinate substrate. Residues 89–91, Glu-99, and 124–130 each bind ATP; these read GIR and WRYLSST.

It belongs to the bacterial CoaD family. Homohexamer. Mg(2+) is required as a cofactor.

It localises to the cytoplasm. It carries out the reaction (R)-4'-phosphopantetheine + ATP + H(+) = 3'-dephospho-CoA + diphosphate. It functions in the pathway cofactor biosynthesis; coenzyme A biosynthesis; CoA from (R)-pantothenate: step 4/5. Its function is as follows. Reversibly transfers an adenylyl group from ATP to 4'-phosphopantetheine, yielding dephospho-CoA (dPCoA) and pyrophosphate. This Actinobacillus pleuropneumoniae serotype 3 (strain JL03) protein is Phosphopantetheine adenylyltransferase.